A 428-amino-acid chain; its full sequence is Probable RNase MJ4 (428 aa).

Residues histidine 57, histidine 59, aspartate 61, histidine 62, histidine 143, aspartate 165, and histidine 397 each coordinate Zn(2+).

The protein belongs to the metallo-beta-lactamase superfamily. RNA-metabolizing metallo-beta-lactamase-like family. Zn(2+) serves as cofactor.

Probably an RNase. This is Probable RNase MJ4 from Methanocaldococcus jannaschii (strain ATCC 43067 / DSM 2661 / JAL-1 / JCM 10045 / NBRC 100440) (Methanococcus jannaschii).